The chain runs to 89 residues: Albumin-1 (89 aa).

A signal peptide is located at residue Ala-1. Intrachain disulfides connect Cys-4–Cys-21, Cys-8–Cys-23, and Cys-16–Cys-33. A propeptide spanning residues 39–46 is cleaved from the precursor; sequence LSSVAKMI.

Post-translationally, the C-terminal glycine may be removed from A1b.

Functionally, A1b binds to basic 7S globulin (BG) and stimulates its phosphorylation activity. The polypeptide is Albumin-1 (LEG) (Vigna radiata var. radiata (Mung bean)).